Reading from the N-terminus, the 524-residue chain is Putative ribose/galactose/methyl galactoside import ATP-binding protein 1 (524 aa).

ABC transporter domains follow at residues 29–270 (LEMR…VGRT) and 280–524 (VPIG…TGGH). 61–68 (GENGAGKS) contacts ATP.

This sequence belongs to the ABC transporter superfamily. Carbohydrate importer 2 (CUT2) (TC 3.A.1.2) family.

It localises to the cell inner membrane. The catalysed reaction is D-ribose(out) + ATP + H2O = D-ribose(in) + ADP + phosphate + H(+). The enzyme catalyses D-galactose(out) + ATP + H2O = D-galactose(in) + ADP + phosphate + H(+). Its function is as follows. Part of an ABC transporter complex involved in carbohydrate import. Could be involved in ribose, galactose and/or methyl galactoside import. Responsible for energy coupling to the transport system. The protein is Putative ribose/galactose/methyl galactoside import ATP-binding protein 1 of Rhizobium etli (strain ATCC 51251 / DSM 11541 / JCM 21823 / NBRC 15573 / CFN 42).